Here is a 180-residue protein sequence, read N- to C-terminus: Large ribosomal subunit protein uL6 (180 aa).

The protein belongs to the universal ribosomal protein uL6 family. As to quaternary structure, part of the 50S ribosomal subunit.

In terms of biological role, this protein binds to the 23S rRNA, and is important in its secondary structure. It is located near the subunit interface in the base of the L7/L12 stalk, and near the tRNA binding site of the peptidyltransferase center. This chain is Large ribosomal subunit protein uL6, found in Anaeromyxobacter dehalogenans (strain 2CP-1 / ATCC BAA-258).